Consider the following 296-residue polypeptide: Light-independent protochlorophyllide reductase iron-sulfur ATP-binding protein (296 aa).

The interval 1-20 (MTTTLSRPTDGEGSVQVQQD) is disordered. ATP contacts are provided by residues 39 to 44 (GIGKST) and lysine 68. Residue serine 43 coordinates Mg(2+). Residues cysteine 124 and cysteine 158 each contribute to the [4Fe-4S] cluster site. 209-210 (NR) serves as a coordination point for ATP.

Belongs to the NifH/BchL/ChlL family. Homodimer. Protochlorophyllide reductase is composed of three subunits; ChlL, ChlN and ChlB. [4Fe-4S] cluster is required as a cofactor.

It catalyses the reaction chlorophyllide a + oxidized 2[4Fe-4S]-[ferredoxin] + 2 ADP + 2 phosphate = protochlorophyllide a + reduced 2[4Fe-4S]-[ferredoxin] + 2 ATP + 2 H2O. The protein operates within porphyrin-containing compound metabolism; chlorophyll biosynthesis (light-independent). In terms of biological role, component of the dark-operative protochlorophyllide reductase (DPOR) that uses Mg-ATP and reduced ferredoxin to reduce ring D of protochlorophyllide (Pchlide) to form chlorophyllide a (Chlide). This reaction is light-independent. The L component serves as a unique electron donor to the NB-component of the complex, and binds Mg-ATP. In Synechococcus sp. (strain CC9902), this protein is Light-independent protochlorophyllide reductase iron-sulfur ATP-binding protein.